Here is a 475-residue protein sequence, read N- to C-terminus: Ribulose bisphosphate carboxylase large chain (475 aa).

The propeptide occupies 1–2 (MS). Pro3 bears the N-acetylproline mark. Lys14 carries the post-translational modification N6,N6,N6-trimethyllysine. Substrate is bound by residues Asn123 and Thr173. Lys175 (proton acceptor) is an active-site residue. Position 177 (Lys177) interacts with substrate. Positions 201, 203, and 204 each coordinate Mg(2+). At Lys201 the chain carries N6-carboxylysine. The Proton acceptor role is filled by His294. Residues Arg295, His327, and Ser379 each coordinate substrate.

The protein belongs to the RuBisCO large chain family. Type I subfamily. Heterohexadecamer of 8 large chains and 8 small chains; disulfide-linked. The disulfide link is formed within the large subunit homodimers. Mg(2+) serves as cofactor. Post-translationally, the disulfide bond which can form in the large chain dimeric partners within the hexadecamer appears to be associated with oxidative stress and protein turnover.

The protein resides in the plastid. It localises to the chloroplast. The catalysed reaction is 2 (2R)-3-phosphoglycerate + 2 H(+) = D-ribulose 1,5-bisphosphate + CO2 + H2O. It carries out the reaction D-ribulose 1,5-bisphosphate + O2 = 2-phosphoglycolate + (2R)-3-phosphoglycerate + 2 H(+). In terms of biological role, ruBisCO catalyzes two reactions: the carboxylation of D-ribulose 1,5-bisphosphate, the primary event in carbon dioxide fixation, as well as the oxidative fragmentation of the pentose substrate in the photorespiration process. Both reactions occur simultaneously and in competition at the same active site. The chain is Ribulose bisphosphate carboxylase large chain from Carica papaya (Papaya).